Reading from the N-terminus, the 202-residue chain is Protein-methionine-sulfoxide reductase heme-binding subunit MsrQ (202 aa).

The next 6 membrane-spanning stretches (helical) occupy residues 8 to 28 (LAVF…AWIF), 42 to 62 (LGLG…LQKL), 75 to 95 (LGLW…VFIL), 110 to 130 (PYII…ITSN), 147 to 167 (LVYL…RADL), and 169 to 189 (EWTL…PSIA).

It belongs to the MsrQ family. As to quaternary structure, heterodimer of a catalytic subunit (MsrP) and a heme-binding subunit (MsrQ). FMN serves as cofactor. Heme b is required as a cofactor.

The protein resides in the cell inner membrane. Part of the MsrPQ system that repairs oxidized periplasmic proteins containing methionine sulfoxide residues (Met-O), using respiratory chain electrons. Thus protects these proteins from oxidative-stress damage caused by reactive species of oxygen and chlorine generated by the host defense mechanisms. MsrPQ is essential for the maintenance of envelope integrity under bleach stress, rescuing a wide series of structurally unrelated periplasmic proteins from methionine oxidation. MsrQ provides electrons for reduction to the reductase catalytic subunit MsrP, using the quinone pool of the respiratory chain. This chain is Protein-methionine-sulfoxide reductase heme-binding subunit MsrQ, found in Pseudomonas aeruginosa (strain UCBPP-PA14).